A 269-amino-acid chain; its full sequence is Phosphate import ATP-binding protein PstB 2 (269 aa).

Positions 22–264 constitute an ABC transporter domain; it reads LSTNDLRVFY…PSLQSTEDYV (243 aa). 55 to 62 provides a ligand contact to ATP; the sequence is GPSGSGKS.

Belongs to the ABC transporter superfamily. Phosphate importer (TC 3.A.1.7) family. The complex is composed of two ATP-binding proteins (PstB), two transmembrane proteins (PstC and PstA) and a solute-binding protein (PstS).

It is found in the cell membrane. It catalyses the reaction phosphate(out) + ATP + H2O = ADP + 2 phosphate(in) + H(+). Its function is as follows. Part of the ABC transporter complex PstSACB involved in phosphate import. Responsible for energy coupling to the transport system. The protein is Phosphate import ATP-binding protein PstB 2 of Lactococcus lactis subsp. lactis (strain IL1403) (Streptococcus lactis).